Here is an 87-residue protein sequence, read N- to C-terminus: Small ribosomal subunit protein bS20 (87 aa).

The segment at 1-26 (MANIKSAKKRAIQSEKARKHNASRRS) is disordered.

This sequence belongs to the bacterial ribosomal protein bS20 family.

Binds directly to 16S ribosomal RNA. This chain is Small ribosomal subunit protein bS20, found in Escherichia coli O17:K52:H18 (strain UMN026 / ExPEC).